Reading from the N-terminus, the 549-residue chain is Cation/acetate symporter ActP (549 aa).

Transmembrane regions (helical) follow at residues 33-53 (WQAIIMFLIFVVFTLGITYWA), 77-97 (LAIAGDYMSAASFLGISALVF), 103-123 (GLIYSLGFLVGWPIILFLIAE), 148-168 (ILSACGSLVVVALYLIAQMVG), 183-203 (IAVVLVGVLMMMYVLFGGMLA), 206-226 (WVQIIKAVLLLFGASFMAFMV), 262-282 (ISALSLGLGLMFGTAGLPHIL), 303-323 (GFMGYFYILTFIIGFGAIMLV), 355-375 (LFLGFISAVAFATILAVVAGL), 404-424 (VSKITVLILGVIAIILGVLFE), 428-448 (IAFMVGLAFAIAASCNFPIIL), 464-484 (GGWLGLITAVVLMILGPTIWV), and 493-513 (IFPYEYPALFSISVAFLGIWF).

This sequence belongs to the sodium:solute symporter (SSF) (TC 2.A.21) family.

It is found in the cell inner membrane. In terms of biological role, transports acetate. In Escherichia coli O17:K52:H18 (strain UMN026 / ExPEC), this protein is Cation/acetate symporter ActP.